A 100-amino-acid polypeptide reads, in one-letter code: Small ribosomal subunit protein bS18c (100 aa).

It belongs to the bacterial ribosomal protein bS18 family. In terms of assembly, part of the 30S ribosomal subunit.

The protein localises to the plastid. It localises to the chloroplast. The polypeptide is Small ribosomal subunit protein bS18c (Pleurastrum terricola (Filamentous green alga)).